Reading from the N-terminus, the 179-residue chain is Large ribosomal subunit protein bL19 (179 aa).

It belongs to the bacterial ribosomal protein bL19 family.

In terms of biological role, this protein is located at the 30S-50S ribosomal subunit interface and may play a role in the structure and function of the aminoacyl-tRNA binding site. The chain is Large ribosomal subunit protein bL19 from Rhizobium johnstonii (strain DSM 114642 / LMG 32736 / 3841) (Rhizobium leguminosarum bv. viciae).